A 236-amino-acid chain; its full sequence is 2-phospho-L-lactate guanylyltransferase (236 aa).

This sequence belongs to the CofC family. In terms of assembly, homodimer.

The enzyme catalyses (2S)-2-phospholactate + GTP + H(+) = (2S)-lactyl-2-diphospho-5'-guanosine + diphosphate. It participates in cofactor biosynthesis; coenzyme F420 biosynthesis. Its function is as follows. Guanylyltransferase that catalyzes the activation of (2S)-2-phospholactate (2-PL) as (2S)-lactyl-2-diphospho-5'-guanosine, via the condensation of 2-PL with GTP. It is involved in the biosynthesis of coenzyme F420, a hydride carrier cofactor. This is 2-phospho-L-lactate guanylyltransferase from Natrialba magadii (strain ATCC 43099 / DSM 3394 / CCM 3739 / CIP 104546 / IAM 13178 / JCM 8861 / NBRC 102185 / NCIMB 2190 / MS3) (Natronobacterium magadii).